We begin with the raw amino-acid sequence, 132 residues long: Small ribosomal subunit protein uS8 (132 aa).

The protein belongs to the universal ribosomal protein uS8 family. In terms of assembly, part of the 30S ribosomal subunit. Contacts proteins S5 and S12.

In terms of biological role, one of the primary rRNA binding proteins, it binds directly to 16S rRNA central domain where it helps coordinate assembly of the platform of the 30S subunit. The sequence is that of Small ribosomal subunit protein uS8 from Mycoplasmopsis pulmonis (strain UAB CTIP) (Mycoplasma pulmonis).